Consider the following 544-residue polypeptide: GMP synthase [glutamine-hydrolyzing] (544 aa).

Residues 12–210 (TILILDFGSQ…VKNVCGVRDG (199 aa)) form the Glutamine amidotransferase type-1 domain. The active-site Nucleophile is cysteine 88. Catalysis depends on residues histidine 184 and glutamate 186. The GMPS ATP-PPase domain maps to 211–419 (WSMESFIPKE…LNIPEHLVGR (209 aa)). An ATP-binding site is contributed by 239–245 (SGGVDST). XMP is bound by residues arginine 312, aspartate 481, lysine 536, and glutamate 542.

In terms of assembly, homodimer. Also forms a small population of homotetramers. It depends on Mg(2+) as a cofactor.

The protein resides in the cytoplasm. It is found in the cytosol. It carries out the reaction XMP + L-glutamine + ATP + H2O = GMP + L-glutamate + AMP + diphosphate + 2 H(+). It participates in purine metabolism; GMP biosynthesis; GMP from XMP (L-Gln route): step 1/1. Its activity is regulated as follows. The enzyme is inhibited by ECC1385; although this compound fails to inhibit growth of the organism. Functionally, catalyzes the conversion of xanthine monophosphate (XMP) to GMP in the presence of glutamine and ATP through an adenyl-XMP intermediate. This is GMP synthase [glutamine-hydrolyzing] from Cryptococcus neoformans var. grubii serotype A (strain H99 / ATCC 208821 / CBS 10515 / FGSC 9487) (Filobasidiella neoformans var. grubii).